The following is a 1155-amino-acid chain: Eukaryotic translation initiation factor 3 subunit A (1155 aa).

A PCI domain is found at 319 to 502; sequence LQRMAAHVLL…NSIYFGTDLT (184 aa). Disordered regions lie at residues 589 to 613 and 836 to 1155; these read QNNAREEEEARRQEEESRKAKLAEQ and AAEA…VKRR. 4 stretches are compositionally biased toward basic and acidic residues: residues 836–900, 925–987, 1004–1057, and 1066–1101; these read AAEA…RGGD, DRNE…EPDS, SRDD…DAAP, and DAPRQSDRDNRRPAGDRRDREVRGGDLRGPESRAPK. Positions 1104–1118 are enriched in gly residues; that stretch reads GPSGGTGTAASGGGN. Over residues 1125-1145 the composition is skewed to basic and acidic residues; sequence PRDEPAPKRDQPQDKENKAVD.

The protein belongs to the eIF-3 subunit A family. As to quaternary structure, component of the eukaryotic translation initiation factor 3 (eIF-3) complex. The eIF-3 complex interacts with pix.

Its subcellular location is the cytoplasm. In terms of biological role, RNA-binding component of the eukaryotic translation initiation factor 3 (eIF-3) complex, which is involved in protein synthesis of a specialized repertoire of mRNAs and, together with other initiation factors, stimulates binding of mRNA and methionyl-tRNAi to the 40S ribosome. The eIF-3 complex specifically targets and initiates translation of a subset of mRNAs involved in cell proliferation. This Drosophila pseudoobscura pseudoobscura (Fruit fly) protein is Eukaryotic translation initiation factor 3 subunit A.